We begin with the raw amino-acid sequence, 246 residues long: tRNA pseudouridine synthase A (246 aa).

Asp52 functions as the Nucleophile in the catalytic mechanism. Tyr111 contributes to the substrate binding site.

Belongs to the tRNA pseudouridine synthase TruA family. As to quaternary structure, homodimer.

The catalysed reaction is uridine(38/39/40) in tRNA = pseudouridine(38/39/40) in tRNA. Functionally, formation of pseudouridine at positions 38, 39 and 40 in the anticodon stem and loop of transfer RNAs. This is tRNA pseudouridine synthase A from Borreliella afzelii (strain PKo) (Borrelia afzelii).